Consider the following 914-residue polypeptide: Probable UDP-N-acetylglucosamine--peptide N-acetylglucosaminyltransferase SPINDLY (914 aa).

The disordered stretch occupies residues 1–39 (MVGLEDDTERERSPVVENGFSNGSRSSSSSAGVLSPSRK). The segment covering 19 to 37 (GFSNGSRSSSSSAGVLSPS) has biased composition (low complexity). S35 is modified (phosphoserine). TPR repeat units follow at residues 43–76 (GNDTLSYANILRARNKFADALALYEAMLEKDSKN), 77–110 (VEAHIGKGICLQTQNKGNLAFDCFSEAIRLDPHN), 112–144 (CALTHCGILHKEEGRLVEAAESYQKALMADASY), 152–185 (AIVLTDLGTSLKLAGNTQEGIQKYYEALKIDPHY), 186–219 (APAYYNLGVVYSEMMQYDNALSCYEKAALERPMY), 220–253 (AEAYCNMGVIYKNRGDLEMAITCYERCLAVSPNF), 261–294 (AIALTDLGTKVKLEGDVTQGVAYYKKALYYNWHY), 295–328 (ADAMYNLGVAYGEMLKFDMAIVFYELAFHFNPHC), 329–362 (AEACNNLGVLYKDRDNLDKAVECYQMALSIKPNF), 364–396 (QSLNNLGVVYTVQGKMDAAASMIEKAILANPTY), and 397–430 (AEAFNNLGVLYRDAGNITMAIDAYEECLKIDPDS). Residues 431 to 914 (RNAGQNRLLA…QLSKRMDSTS (484 aa)) form a catalytic region region. Positions 866-914 (PLISKDLGPSRVSVTGEATPSLKANGSAPVPSSLPTQSPQLSKRMDSTS) are disordered. Over residues 877–889 (VSVTGEATPSLKA) the composition is skewed to polar residues. A compositionally biased stretch (low complexity) spans 894–907 (PVPSSLPTQSPQLS).

This sequence belongs to the glycosyltransferase 41 family. O-GlcNAc transferase subfamily. Homomultimer; via its TPR repeats. Interacts with GI. Interacts with TCP14 and TCP15. Interacts (via N-terminus) with APRR5. Interacts with CPN20. As to expression, widely expressed. Present throughout the plant (at protein level).

It is found in the cytoplasm. The protein localises to the nucleus. The enzyme catalyses L-seryl-[protein] + UDP-N-acetyl-alpha-D-glucosamine = 3-O-(N-acetyl-beta-D-glucosaminyl)-L-seryl-[protein] + UDP + H(+). It catalyses the reaction L-threonyl-[protein] + UDP-N-acetyl-alpha-D-glucosamine = 3-O-(N-acetyl-beta-D-glucosaminyl)-L-threonyl-[protein] + UDP + H(+). The catalysed reaction is L-seryl-[protein] + GDP-beta-L-fucose = 3-O-(alpha-L-fucosyl)-L-seryl-[protein] + GDP + H(+). It carries out the reaction L-threonyl-[protein] + GDP-beta-L-fucose = 3-O-(alpha-L-fucosyl)-L-threonyl-[protein] + GDP + H(+). Its pathway is protein modification; protein glycosylation. Functionally, probable O-linked N-acetylglucosamine transferase (OGT) involved in various processes such as gibberellin (GA) signaling pathway and circadian clock. OGTs catalyze the addition of nucleotide-activated sugars directly onto the polypeptide through O-glycosidic linkage with the hydroxyl of serine or threonine. Probably acts by adding O-linked sugars to yet unknown proteins. Acts as a repressor of GA signaling pathway to inhibit hypocotyl elongation. Functions with GIGANTEA (GI) in pathways controlling flowering, circadian cotyledon movements and hypocotyl elongation. Acts as a light-regulated promoter of elongation via its interaction with GI. Acts as an activator of cytokinin signaling. Required with SEC for gamete and seed development. Its OGT activity has been proved in vitro but not in vivo. Possesses O-fucosyltransferase activity on specific serine and threonine residues. Mediates O-fucosylation of the DELLA protein RGA, a repressor of the GA signaling pathway. O-fucosylation enhances RGA activity by promoting RGA binding to key transcription factors in brassinosteroid and light-signaling pathways. Regulates root hair patterning upstream of the transcription factor WER, independently of DELLA proteins and GA signaling. Involved in abscisic acid (ABA) signaling partly through functional ABAR. Mediates O-fucosylation of CPN20 that may depress ABA responses during seed germination and seedling development. Involved in the modulation of the pace of the circadian clock by mediating O-fucosylation of APRR5, one of the core circadian clock components. O-fucosylation promotes APRR5 proteolysis. This chain is Probable UDP-N-acetylglucosamine--peptide N-acetylglucosaminyltransferase SPINDLY, found in Arabidopsis thaliana (Mouse-ear cress).